The primary structure comprises 365 residues: Transcription factor KUA1 (365 aa).

Positions 1–21 (MTRRCSHCNHNGHNSRTCPNR) are disordered. Residues 3-20 (RRCSHCNHNGHNSRTCPN) form a CCHC-type zinc finger. Residues 8 to 18 (CNHNGHNSRTC) are compositionally biased toward polar residues. The R/KLFGV (transcriptional repression) motif lies at 24-28 (KLFGV). The segment at 41–99 (MGNLSHYTGSGSGGHGTGSNTPGSPGDVPDHVAGDGYASEDFVAGSSSSRERKKGTPWT) is disordered. An HTH myb-type domain is found at 90 to 146 (RERKKGTPWTEEEHRMFLLGLQKLGKGDWRGISRNYVTTRTPTQVASHAQKYFIRQS). Residues 118 to 142 (WRGISRNYVTTRTPTQVASHAQKYF) constitute a DNA-binding region (H-T-H motif). Disordered stretches follow at residues 214–254 (SMDS…QPQL) and 321–365 (ESNK…IHAL). A compositionally biased stretch (low complexity) spans 220-254 (STTGEPTATAAAASSSSRLEETTQLQSQLQPQPQL). The segment covering 343–355 (RQSAFHPNPSSDS) has biased composition (polar residues).

Expressed ubiquitously, except in hypocotyls, root tips and lateral root primordia.

Its subcellular location is the nucleus. Its function is as follows. Transcriptional repressor. Direct regulator of the transcription of peroxidase (Prxs) and reactive oxygen species (ROS)-related genes via the recognition of 5'-ATCACA-3' motif. Binds to 5'-TATCCA-3' motif (TA box) and represses the activity of corresponding promoters (e.g. sugar response genes). Regulates hypocotyl elongation in response to darkness by enhancing auxin accumulation in a phytochrome-interacting factor (PIF) proteins-dependent manner. Promotes lateral roots formation. Promotes cell expansion during leaves development via the modulation of cell wall-located Prxs. Plays a critical role in developmentally regulated and dark-induced onset of leaf senescence by repressing the transcription of several genes involved in chloroplast function and responses to light and auxin. Promotes responses to auxin, abscisic acid (ABA), and ethylene. The chain is Transcription factor KUA1 from Arabidopsis thaliana (Mouse-ear cress).